The primary structure comprises 122 residues: HetP-like commitment protein Alr3234 (122 aa).

This sequence belongs to the HetP family. As to quaternary structure, in bacterial two-hybrid assays interacts robustly with itself, Asl1930, Alr2902 and HetR and weakly with HetP.

Its function is as follows. Delays heterocyst differentiation and commitment when nitrogen is limiting. Interplay between the 4 HetP paralogs controls the timing of commitment to heterocyst formation and its duration. Epistatic analysis show that the 3 paralogs act upstream of hetP to delay commitment (asl1930, alr3234) or inhibit development (alr2902). Asl1930 and Alr3234 must also attenuate the activity of Alr2902. Ectopic expression does not complement a hetP deletion. This is HetP-like commitment protein Alr3234 from Nostoc sp. (strain PCC 7120 / SAG 25.82 / UTEX 2576).